A 278-amino-acid polypeptide reads, in one-letter code: 3-methyl-2-oxobutanoate hydroxymethyltransferase 1 (278 aa).

Asp49 and Asp88 together coordinate Mg(2+). 3-methyl-2-oxobutanoate contacts are provided by residues 49–50 (DS), Asp88, and Lys118. Glu120 contacts Mg(2+). Glu187 serves as the catalytic Proton acceptor.

This sequence belongs to the PanB family. As to quaternary structure, homodecamer; pentamer of dimers. Requires Mg(2+) as cofactor.

It is found in the cytoplasm. It catalyses the reaction 3-methyl-2-oxobutanoate + (6R)-5,10-methylene-5,6,7,8-tetrahydrofolate + H2O = 2-dehydropantoate + (6S)-5,6,7,8-tetrahydrofolate. The protein operates within cofactor biosynthesis; (R)-pantothenate biosynthesis; (R)-pantoate from 3-methyl-2-oxobutanoate: step 1/2. Its function is as follows. Catalyzes the reversible reaction in which hydroxymethyl group from 5,10-methylenetetrahydrofolate is transferred onto alpha-ketoisovalerate to form ketopantoate. The polypeptide is 3-methyl-2-oxobutanoate hydroxymethyltransferase 1 (Hahella chejuensis (strain KCTC 2396)).